Reading from the N-terminus, the 269-residue chain is 4-hydroxy-tetrahydrodipicolinate reductase (269 aa).

NAD(+) contacts are provided by residues 10-15 (GANGRM), E36, 99-101 (GTT), and 123-126 (AANF). H156 acts as the Proton donor/acceptor in catalysis. H157 lines the (S)-2,3,4,5-tetrahydrodipicolinate pocket. K160 functions as the Proton donor in the catalytic mechanism. Position 166 to 167 (166 to 167 (GT)) interacts with (S)-2,3,4,5-tetrahydrodipicolinate.

It belongs to the DapB family.

It localises to the cytoplasm. It catalyses the reaction (S)-2,3,4,5-tetrahydrodipicolinate + NAD(+) + H2O = (2S,4S)-4-hydroxy-2,3,4,5-tetrahydrodipicolinate + NADH + H(+). The enzyme catalyses (S)-2,3,4,5-tetrahydrodipicolinate + NADP(+) + H2O = (2S,4S)-4-hydroxy-2,3,4,5-tetrahydrodipicolinate + NADPH + H(+). It functions in the pathway amino-acid biosynthesis; L-lysine biosynthesis via DAP pathway; (S)-tetrahydrodipicolinate from L-aspartate: step 4/4. Catalyzes the conversion of 4-hydroxy-tetrahydrodipicolinate (HTPA) to tetrahydrodipicolinate. The protein is 4-hydroxy-tetrahydrodipicolinate reductase of Neisseria meningitidis serogroup C (strain 053442).